The following is a 206-amino-acid chain: Thymidylate kinase (206 aa).

Position 10–17 (10–17 (GIDGAGKS)) interacts with ATP.

This sequence belongs to the thymidylate kinase family.

The catalysed reaction is dTMP + ATP = dTDP + ADP. Phosphorylation of dTMP to form dTDP in both de novo and salvage pathways of dTTP synthesis. This Neisseria meningitidis serogroup B (strain ATCC BAA-335 / MC58) protein is Thymidylate kinase (tmk).